Consider the following 54-residue polypeptide: UPF0391 membrane protein Mfla_0947/Mfla_1091 (54 aa).

A run of 2 helical transmembrane segments spans residues 6–26 (VIFFVIALIAAFFGFSGIAAG) and 30–50 (IAKILFFVFLIITIVSLVAGI).

It belongs to the UPF0391 family.

It localises to the cell membrane. The chain is UPF0391 membrane protein Mfla_0947/Mfla_1091 from Methylobacillus flagellatus (strain ATCC 51484 / DSM 6875 / VKM B-1610 / KT).